We begin with the raw amino-acid sequence, 461 residues long: Glycogen synthase (461 aa).

Lysine 15 is an ADP-alpha-D-glucose binding site.

The protein belongs to the glycosyltransferase 1 family. Bacterial/plant glycogen synthase subfamily.

The catalysed reaction is [(1-&gt;4)-alpha-D-glucosyl](n) + ADP-alpha-D-glucose = [(1-&gt;4)-alpha-D-glucosyl](n+1) + ADP + H(+). The protein operates within glycan biosynthesis; glycogen biosynthesis. In terms of biological role, synthesizes alpha-1,4-glucan chains using ADP-glucose. In Fusobacterium nucleatum subsp. nucleatum (strain ATCC 25586 / DSM 15643 / BCRC 10681 / CIP 101130 / JCM 8532 / KCTC 2640 / LMG 13131 / VPI 4355), this protein is Glycogen synthase.